Here is a 312-residue protein sequence, read N- to C-terminus: Olfactory receptor 5P4 (312 aa).

The Extracellular segment spans residues 1 to 25 (METENDTMVTEFIILGLTDSATLRA). The N-linked (GlcNAc...) asparagine glycan is linked to N5. The chain crosses the membrane as a helical span at residues 26–46 (ILFVFFLPVYIVTVVGNISII). Topologically, residues 47-54 (LLIRSSPQ) are cytoplasmic. The helical transmembrane segment at 55-75 (LHTPMYLFLSHLAFVDIGYST) threads the bilayer. Residues 76-99 (SVTPIMLISFLREETTIPLAGCAA) lie on the Extracellular side of the membrane. A disulfide bond links C97 and C189. The helical transmembrane segment at 100–120 (QLGSDVAFGTTECFLLATMAY) threads the bilayer. The Cytoplasmic portion of the chain corresponds to 121 to 133 (DRYVAICSPLLYS). The helical transmembrane segment at 134–154 (TQMSPAICCFLLGASYLGGCM) threads the bilayer. The Extracellular portion of the chain corresponds to 155–196 (NASSFTGCFVNLNFCGPNKVNHFFCDLFPLVKLSCGHAYIAE). The helical transmembrane segment at 197–217 (ISPSISSASVLVSTLSTIIVS) threads the bilayer. Residues 218–237 (YIYILHSILRMRSAEGRNKA) are Cytoplasmic-facing. The helical transmembrane segment at 238–258 (FSTCTSHLTAVTLFYGTVLFV) threads the bilayer. Over 259–271 (YVMPKSSYSADQV) the chain is Extracellular. The helical transmembrane segment at 272–292 (KVASVVYTVVIPMLNPLIYSL) threads the bilayer. Residues 293-312 (RNKEVKEAMKKLMARTHWFP) lie on the Cytoplasmic side of the membrane.

Belongs to the G-protein coupled receptor 1 family.

It localises to the cell membrane. Its function is as follows. Potential odorant receptor. The polypeptide is Olfactory receptor 5P4 (Mus musculus (Mouse)).